The sequence spans 334 residues: Cobalt-precorrin-5B C(1)-methyltransferase (334 aa).

The protein belongs to the CbiD family.

The enzyme catalyses Co-precorrin-5B + S-adenosyl-L-methionine = Co-precorrin-6A + S-adenosyl-L-homocysteine. It functions in the pathway cofactor biosynthesis; adenosylcobalamin biosynthesis; cob(II)yrinate a,c-diamide from sirohydrochlorin (anaerobic route): step 6/10. Functionally, catalyzes the methylation of C-1 in cobalt-precorrin-5B to form cobalt-precorrin-6A. The sequence is that of Cobalt-precorrin-5B C(1)-methyltransferase from Methanoregula boonei (strain DSM 21154 / JCM 14090 / 6A8).